Here is a 58-residue protein sequence, read N- to C-terminus: Small ribosomal subunit protein bS21 (58 aa).

The protein belongs to the bacterial ribosomal protein bS21 family.

This is Small ribosomal subunit protein bS21 from Streptococcus pyogenes serotype M49 (strain NZ131).